Reading from the N-terminus, the 386-residue chain is MLKYASIALALATLGVAQQQQWGQCGGIGWTGATTCVAGSVCSVLNPYYSQCIPGAATVTSSSAPSTPTPPAGALPRLGGVNTAGYDFSVATDGSFTGTGVSPPVSQFSHFSSQGANLYRIPFAWQLMTPTLGGTISQSFLSRYDQTVQAALNSGPNVFVIIDLHNYARWNGGIIAQGGPTDAQFQSIWTQLAQKYGSNQRVIFGIMNEPHDIPSISTWVNSVQGAVNAIRAAGATNYLLLPGSSWSSAQAFPTEAGPLLVKVTDPLGGTSKLIFDVHKYLDSDNSGTHPDCTTDNVQVLQTLVQFLQANGNRQAILSETGGGNTSSCESLLANELAYVKSAYPTLAGFSVWAAGAFDTTYVLTVTPNADGSDQPLWVDAVKPNLP.

Residues 1–17 (MLKYASIALALATLGVA) form the signal peptide. The CBM1 domain occupies 18 to 53 (QQQQWGQCGGIGWTGATTCVAGSVCSVLNPYYSQCI). Glu209 acts as the Proton donor in catalysis. Residue Glu319 is the Nucleophile of the active site. N-linked (GlcNAc...) asparagine glycosylation occurs at Asn324.

Belongs to the glycosyl hydrolase 5 (cellulase A) family. Mn(2+) serves as cofactor.

Its subcellular location is the secreted. It catalyses the reaction Endohydrolysis of (1-&gt;4)-beta-D-glucosidic linkages in cellulose, lichenin and cereal beta-D-glucans.. Secreted manganese dependent endoglucanase that acts by cleaving the beta-1,4-glucose linkage. Exhibits high activity toward carboxymethyl-cellulose (CMC), barley glucan, and glucomannan. Displays low activity on larminarin and xyloglucan but does not hydrolyze hemicellulose substrates such as birchwood xylan, arabinoxylan, and arabinan. The chain is Manganese dependent endoglucanase Eg5A from Phanerodontia chrysosporium (White-rot fungus).